A 282-amino-acid polypeptide reads, in one-letter code: MLRKPAVAGMFYPDDSEELVKTIEDCFLHSFGPGKIPDIESFEGNDYPVNVMVPHAGFQYSGTIAAHSYCELAKNGFPEVFIIIGPNHTGLGSEVSVFNKGEWITPLGNIQVDEEFADTLISFSDFASADFAAHMREHSIEVQLPFLQYFSNDFKIVPVVLGSQTISAANDLAAAILKAGEKLDKSYCVIASSDLSHFNTQERANKVDGFVLEDIENMDEFKLLEEIIQYNITMCGYGPVMTTMILSKMCGKNTSEILAYKTSGDISGDLSSVVGYASGIFK.

Belongs to the MEMO1 family.

In Methanobrevibacter smithii (strain ATCC 35061 / DSM 861 / OCM 144 / PS), this protein is MEMO1 family protein Msm_1438.